A 489-amino-acid chain; its full sequence is Glutamyl-tRNA(Gln) amidotransferase subunit A (489 aa).

Residues Lys77 and Ser152 each act as charge relay system in the active site. Residue Ser176 is the Acyl-ester intermediate of the active site.

Belongs to the amidase family. GatA subfamily. As to quaternary structure, heterotrimer of A, B and C subunits.

It carries out the reaction L-glutamyl-tRNA(Gln) + L-glutamine + ATP + H2O = L-glutaminyl-tRNA(Gln) + L-glutamate + ADP + phosphate + H(+). Functionally, allows the formation of correctly charged Gln-tRNA(Gln) through the transamidation of misacylated Glu-tRNA(Gln) in organisms which lack glutaminyl-tRNA synthetase. The reaction takes place in the presence of glutamine and ATP through an activated gamma-phospho-Glu-tRNA(Gln). This is Glutamyl-tRNA(Gln) amidotransferase subunit A from Protochlamydia amoebophila (strain UWE25).